A 239-amino-acid polypeptide reads, in one-letter code: Serine protease SplF (239 aa).

An N-terminal signal peptide occupies residues 1-36 (MNKNIIIKSIAALTILTSVTGVGTTMVEGIQQTAKA). Active-site charge relay system residues include H75, D114, and S192.

It belongs to the peptidase S1B family.

The protein localises to the secreted. This is Serine protease SplF (splF) from Staphylococcus aureus (strain Mu50 / ATCC 700699).